The sequence spans 1415 residues: Zygote defective protein 9 (1415 aa).

TOG stretches follow at residues 1–250 (MSNW…AKNA) and 251–530 (PPVA…AGPA). Positions 21–48 (DELRESKKWQERKEALEALLKVLTDNER) form a coiled coil. 4 HEAT repeats span residues 30–68 (QERK…VLAK), 95–132 (SFAG…TMQS), 135–172 (TGQE…AKQP), and 179–217 (VVPV…VKNL). A disordered region spans residues 243 to 278 (AEEQAKNAPPVAPTSSTPSASAASGDPSGGTATAVV). Positions 255–276 (PTSSTPSASAASGDPSGGTATA) are enriched in low complexity. HEAT repeat units follow at residues 339–377 (ANYG…GLRT), 381–418 (PFAV…TTNL), 420–457 (AVGE…QTMP), and 464–502 (LIPS…SLQL). The tract at residues 544–603 (APPAAAPPKKTAPPKKQPEDEEVVEEEDEPLKPPPGDKKKKVPVKENEENEPPVVAPKAE) is disordered. The segment covering 562–572 (EDEEVVEEEDE) has biased composition (acidic residues). The segment at 602 to 867 (AELLLSDNED…VEERIKRTGV (266 aa)) is TOG 3. HEAT repeat units lie at residues 706-743 (IKVL…LKTG), 764-801 (VGPL…NAGI), and 804-841 (LKSL…FEGD). The disordered stretch occupies residues 867–914 (VKPGSGVVTSPPTGGPKILVPQQQGSVVRRPASRSRTREPEPEEVQSD).

This sequence belongs to the TOG/XMAP215 family. In terms of assembly, interacts with tac-1 to form a heterodimer.

The protein localises to the cytoplasm. It localises to the cytoskeleton. The protein resides in the spindle pole. It is found in the microtubule organizing center. Its subcellular location is the centrosome. Its function is as follows. Plays a major role in organizing microtubules and spindle poles during mitosis and meiosis in one-cell stage embryos. Required for default nucleus positioning in oocytes. This is Zygote defective protein 9 from Caenorhabditis elegans.